Here is a 435-residue protein sequence, read N- to C-terminus: Trigger factor (435 aa).

The 86-residue stretch at 163 to 248 folds into the PPIase FKBP-type domain; sequence GDFVTFDFKG…VKEIKVKELP (86 aa).

The protein belongs to the FKBP-type PPIase family. Tig subfamily.

It is found in the cytoplasm. It catalyses the reaction [protein]-peptidylproline (omega=180) = [protein]-peptidylproline (omega=0). In terms of biological role, involved in protein export. Acts as a chaperone by maintaining the newly synthesized protein in an open conformation. Functions as a peptidyl-prolyl cis-trans isomerase. The protein is Trigger factor of Geobacter sp. (strain M21).